The following is a 58-amino-acid chain: Metallothionein (58 aa).

Positions 1 to 29 are beta; it reads PDPCCAEGTCECEEGKCKAGCKCTSCRCS. A divalent metal cation is bound by residues Cys4, Cys5, Cys10, Cys12, Cys17, Cys21, Cys23, Cys26, Cys28, Cys31, Cys34, Cys38, Cys40, Cys46, Cys50, Cys54, Cys56, and Cys57. The segment at 30–58 is alpha; the sequence is PCEKCTSECECKSKEECAKNCTKPCSCCP.

Its function is as follows. Metallothioneins have a high content of cysteine residues that bind various heavy metals. Class I MTS in crustacea are involved in the sequestration of elevated levels of heavy-metal ions. This is Metallothionein from Potamon potamios.